The sequence spans 362 residues: Apelin receptor A (362 aa).

At 1–34 (MEPTSEYTETYDYYDTGYNDSGCDYSEWEPSYSL) the chain is on the extracellular side. Asparagine 19 carries an N-linked (GlcNAc...) asparagine glycan. Cystine bridges form between cysteine 23–cysteine 286 and cysteine 105–cysteine 184. A helical membrane pass occupies residues 35–55 (IPVLYMLIFILGLSGNGVVIF). The Cytoplasmic portion of the chain corresponds to 56–73 (TVWRAKSKRRAADVYIGN). A helical transmembrane segment spans residues 74 to 94 (LALADLTFVITLPLWAVYTAL). Residues 95–106 (GYHWPFGVALCK) are Extracellular-facing. The chain crosses the membrane as a helical span at residues 107-127 (ISSYVVLVNMYASVFCLTCLS). The Cytoplasmic segment spans residues 128–149 (FDRYLAIVHSLSSGRLRSRATM). The chain crosses the membrane as a helical span at residues 150-170 (LASLGAIWFLSCLLAVPTLLF). The Extracellular segment spans residues 171–211 (RTTVDDTGSNRTTCAMDFSLVTLNQDHESLWIAGLSLSSSA). Residue asparagine 180 is glycosylated (N-linked (GlcNAc...) asparagine). The chain crosses the membrane as a helical span at residues 212-232 (LGFLLPFLAMTVCYCFIGCTV). Over 233 to 248 (TRHFSHLRKEDQKKRR) the chain is Cytoplasmic. The chain crosses the membrane as a helical span at residues 249 to 269 (LLKIITTLVVVFAFCWTPFHV). Residues 270 to 284 (LKSMDALSYLDLAPN) lie on the Extracellular side of the membrane. A helical membrane pass occupies residues 285 to 305 (SCGFLHFLLLAHPYATCLAYV). Topologically, residues 306-362 (NSCLNPFLYAFFDLRFRSQCLCLLNLKKAMHGHMSSMSSTLSAQTQKSEVQSLATKV) are cytoplasmic.

This sequence belongs to the G-protein coupled receptor 1 family. In terms of tissue distribution, first expressed before epiboly in dorsal precursors. During epiboly, expressed in the enveloping layer, yolk syncytial layer and migrating mesendoderm. During segmentation stages, expressed in epithelial structures such as adaxial cells, border cells of the newly formed somites, developing lens, otic vesicles and venous vasculature.

The protein resides in the cell membrane. G protein-coupled receptor for peptide hormones apelin (apln) and apelin receptor early endogenous ligand (apela), that plays a role in the regulation of normal cardiovascular function and fluid homeostasis. When acting as apelin receptor, activates both G(i) protein pathway that inhibits adenylate cyclase activity, and the beta-arrestin pathway that promotes internalization of the receptor. Also functions as mechanoreceptor that is activated by pathological stimuli in a G-protein-independent fashion to induce beta-arrestin signaling, hence eliciting cardiac hypertrophy. However, the presence of apelin ligand blunts cardiac hypertrophic induction from APLNR/APJ on response to pathological stimuli. Plays a key role in early development such as gastrulation, blood vessels formation and heart morphogenesis by acting as a receptor for apela hormone, promoting endoderm and mesendoderm cell migration and regulating the migration of cells fated to become myocardial progenitors, respectively. Positively regulates angioblast migration toward the embryonic midline, i.e. the position of the future vessel formation, during vasculogenesis. May promote sinus venosus (SV)-derived endothelial cells migration into the developing heart to promote coronary blood vessel development. Required for cardiovascular development, particularly for intersomitic vein angiogenesis by acting as a receptor for apln hormone. Also plays a role in various processes in adults such as regulation of blood vessel formation, blood pressure, heart contractility, and heart failure. Acts redundantly with agtrl1b in heart development. In Danio rerio (Zebrafish), this protein is Apelin receptor A (aplnra).